A 218-amino-acid polypeptide reads, in one-letter code: Acetoacetyl-CoA:acetate/butyrate CoA transferase alpha subunit (218 aa).

24-30 (GGFLNCG) is a CoA binding site.

The protein belongs to the 3-oxoacid CoA-transferase subunit A family. Heterotetramer composed of two alpha subunits (CtfA) and two beta subunits (CtfB).

The catalysed reaction is acetoacetate + butanoyl-CoA = acetoacetyl-CoA + butanoate. The enzyme catalyses acetoacetate + acetyl-CoA = acetoacetyl-CoA + acetate. Its activity is regulated as follows. The acetate and butyrate conversion reactions are inhibited in vitro by physiological levels of acetone and butanol. Its function is as follows. Catalyzes the transfer of CoA from acetoacetyl-CoA to acetate, butyrate and propionate. Also shows low activity with valerate, isobutyrate and crotonate. Plays an important role in the metabolic shift between the acid-producing and solvent-forming states of C.acetobutylicum. Acts mainly to detoxify the medium by removing the acetate and butyrate excreted earlier in the fermentation. The polypeptide is Acetoacetyl-CoA:acetate/butyrate CoA transferase alpha subunit (Clostridium acetobutylicum (strain ATCC 824 / DSM 792 / JCM 1419 / IAM 19013 / LMG 5710 / NBRC 13948 / NRRL B-527 / VKM B-1787 / 2291 / W)).